The following is a 244-amino-acid chain: Phosphoadenosine 5'-phosphosulfate reductase (244 aa).

The active-site Nucleophile; cysteine thiosulfonate intermediate is cysteine 239.

Belongs to the PAPS reductase family. CysH subfamily.

It localises to the cytoplasm. The enzyme catalyses [thioredoxin]-disulfide + sulfite + adenosine 3',5'-bisphosphate + 2 H(+) = [thioredoxin]-dithiol + 3'-phosphoadenylyl sulfate. It functions in the pathway sulfur metabolism; hydrogen sulfide biosynthesis; sulfite from sulfate: step 3/3. Functionally, catalyzes the formation of sulfite from phosphoadenosine 5'-phosphosulfate (PAPS) using thioredoxin as an electron donor. This Buchnera aphidicola subsp. Acyrthosiphon pisum (strain Tuc7) protein is Phosphoadenosine 5'-phosphosulfate reductase.